Consider the following 238-residue polypeptide: Capsular polysaccharide phosphotransferase eps5J (238 aa).

It belongs to the stealth family.

This Streptococcus thermophilus protein is Capsular polysaccharide phosphotransferase eps5J (eps5J).